We begin with the raw amino-acid sequence, 322 residues long: Phospho-N-acetylmuramoyl-pentapeptide-transferase (322 aa).

10 helical membrane-spanning segments follow: residues 10–30, 51–71, 79–99, 107–127, 146–166, 178–198, 203–223, 227–247, 250–270, and 302–322; these read YTALIAFLIVIIIGPIFIPML, NGTPTMGGIIMIVAILITGLT, MAVGLICIAGFGFIGFLDDFI, LGLKAYQKIILQVALSFYVAF, FVINVGILYIPIMMFIIVAIV, LASGVTLIVSVFFMLFASSIA, VAVLAAATVGACLGFLGFNSY, VFMGDTGSMALGGAVVAFSVL, SVLIIPIIGGIYFAEALSVLI, and VVFIFWIITVVLAWISIIAVF.

Belongs to the glycosyltransferase 4 family. MraY subfamily. It depends on Mg(2+) as a cofactor.

It localises to the cell membrane. The enzyme catalyses UDP-N-acetyl-alpha-D-muramoyl-L-alanyl-gamma-D-glutamyl-meso-2,6-diaminopimeloyl-D-alanyl-D-alanine + di-trans,octa-cis-undecaprenyl phosphate = di-trans,octa-cis-undecaprenyl diphospho-N-acetyl-alpha-D-muramoyl-L-alanyl-D-glutamyl-meso-2,6-diaminopimeloyl-D-alanyl-D-alanine + UMP. It participates in cell wall biogenesis; peptidoglycan biosynthesis. Catalyzes the initial step of the lipid cycle reactions in the biosynthesis of the cell wall peptidoglycan: transfers peptidoglycan precursor phospho-MurNAc-pentapeptide from UDP-MurNAc-pentapeptide onto the lipid carrier undecaprenyl phosphate, yielding undecaprenyl-pyrophosphoryl-MurNAc-pentapeptide, known as lipid I. The polypeptide is Phospho-N-acetylmuramoyl-pentapeptide-transferase (Clostridioides difficile (strain 630) (Peptoclostridium difficile)).